We begin with the raw amino-acid sequence, 372 residues long: Oxidoreductase ptaL (372 aa).

The N-terminal stretch at 1–16 (MKHIVIIGGGFAGVST) is a signal peptide. 6-hydroxy-FAD contacts are provided by residues 8–12 (GGGFA) and arginine 51. A glycan (N-linked (GlcNAc...) asparagine) is linked at asparagine 251. A 6-hydroxy-FAD-binding site is contributed by aspartate 285.

This sequence belongs to the FAD-dependent oxidoreductase family. 6-hydroxy-FAD serves as cofactor.

The protein operates within secondary metabolite biosynthesis. Functionally, oxidoreductase; part of the gene cluster that mediates the biosynthesis of pestheic acid, a diphenyl ether which is a biosynthetic precursor of the unique chloropupukeananes. The biosynthesis initiates from condensation of acetate and malonate units catalyzed by the non-reducing PKS ptaA. As the ptaA protein is TE/CLC domain-deficient, hydrolysis and Claisen cyclization of the polyketide could be catalyzed by ptaB containing a beta-lactamase domain. The ptaB protein might hydrolyze the thioester bond between the ACP of ptaA and the intermediate to release atrochrysone carboxylic acid, which is spontaneously dehydrated to form endocrocin anthrone. Endocrocin anthrone is then converted to endocrocin, catalyzed by the anthrone oxygenase ptaC. Spontaneous decarboxylation of endocrocin occurs to generate emodin. An O-methyltransferase (ptaH or ptaI) could methylate emodin to form physcion. PtaJ could then catalyze the oxidative cleavage of physcion, and rotation of the intermediate could then afford desmethylisosulochrin. PtaF, a putative NADH-dependent oxidoreductase, might also participate in the oxidative cleavage step. Desmethylisosulochrin is then transformed by another O-methyltransferase (ptaH or ptaI) to form isosulochrin. Chlorination of isosulochrin by ptaM in the cyclohexadienone B ring then produces chloroisosulochrin. PtaE is responsible for the oxidative coupling reactions of both benzophenones isosulochrin and chloroisosulochrin to RES-1214-1 and pestheic acid respectively, regardless of chlorination. This is Oxidoreductase ptaL from Pestalotiopsis fici (strain W106-1 / CGMCC3.15140).